The primary structure comprises 1059 residues: Endo-1,4-beta-xylanase A (1059 aa).

The first 30 residues, 1–30 (MQVRKRRGLLDVSTAVLVGILAGFLGVVLA), serve as a signal peptide directing secretion. Positions 47–199 (SSLETVLALS…LDKVQVLAPK (153 aa)) are A-1. The interval 200-354 (ESGPKVIYET…DDVKIVDTTS (155 aa)) is A-2. A GH10 domain is found at 364 to 692 (EKEIPALKEV…KLAYWAIVAP (329 aa)). E502 (proton donor) is an active-site residue. E608 (nucleophile) is an active-site residue. CBM-cenC domains are found at residues 700–870 (KESR…LEGI) and 871–1059 (MVAT…RLIK).

It belongs to the glycosyl hydrolase 10 (cellulase F) family.

It carries out the reaction Endohydrolysis of (1-&gt;4)-beta-D-xylosidic linkages in xylans.. The chain is Endo-1,4-beta-xylanase A (xynA) from Thermotoga maritima (strain ATCC 43589 / DSM 3109 / JCM 10099 / NBRC 100826 / MSB8).